A 382-amino-acid chain; its full sequence is D-galactonate dehydratase (382 aa).

Asp-183 contacts Mg(2+). Residue His-185 is the Proton donor of the active site. Residues Glu-209 and Glu-235 each contribute to the Mg(2+) site. His-285 (proton acceptor) is an active-site residue.

This sequence belongs to the mandelate racemase/muconate lactonizing enzyme family. GalD subfamily. The cofactor is Mg(2+).

It carries out the reaction D-galactonate = 2-dehydro-3-deoxy-D-galactonate + H2O. The protein operates within carbohydrate acid metabolism; D-galactonate degradation; D-glyceraldehyde 3-phosphate and pyruvate from D-galactonate: step 1/3. Catalyzes the dehydration of D-galactonate to 2-keto-3-deoxy-D-galactonate. This chain is D-galactonate dehydratase, found in Escherichia coli O45:K1 (strain S88 / ExPEC).